Reading from the N-terminus, the 272-residue chain is MPALDEIKSSWADEVELDSGSLPPPTEIVENGQKVVTEYKYNKDDKKVKVVRTYKITRLVVPKSVAKRKNWAKFGDSAGDKPGPNPQTTFVSEDIYMQFVSNKEEEQKSDNALDSLKNIAKCRICEGEHWSVQCPYKGTSYEAGKAKPVPAAQPESSSAPIKSGKYVPPSMRDSQKAALGANPRGRDDTTAIRISNLSEAMTEADLEELVKKIGPHSKMFLARDKNTGLCKGFAYVHFKSRRDAATAIELLNGHGYDHLILNVEWSKPQNPQ.

2 disordered regions span residues 1–28 (MPALDEIKSSWADEVELDSGSLPPPTEI) and 143–187 (AGKA…RGRD). Residues 190–268 (TAIRISNLSE…LILNVEWSKP (79 aa)) form the RRM domain.

It belongs to the eIF-3 subunit G family. As to quaternary structure, component of the eukaryotic translation initiation factor 3 (eIF-3) complex.

The protein resides in the cytoplasm. Its function is as follows. RNA-binding component of the eukaryotic translation initiation factor 3 (eIF-3) complex, which is involved in protein synthesis of a specialized repertoire of mRNAs and, together with other initiation factors, stimulates binding of mRNA and methionyl-tRNAi to the 40S ribosome. The eIF-3 complex specifically targets and initiates translation of a subset of mRNAs involved in cell proliferation. This subunit can bind 18S rRNA. The polypeptide is Eukaryotic translation initiation factor 3 subunit G (Culex quinquefasciatus (Southern house mosquito)).